The sequence spans 786 residues: Wall-associated receptor kinase-like 17 (786 aa).

The first 30 residues, 1–30 (MSYKNTNNSHLILFKLLLLLILYSADLTAS), serve as a signal peptide directing secretion. The Extracellular segment spans residues 31–369 (SSCRSECGGC…YRCVGDKTKA (339 aa)). 5 N-linked (GlcNAc...) asparagine glycosylation sites follow: asparagine 69, asparagine 122, asparagine 160, asparagine 165, and asparagine 274. Positions 301-362 (CICDYTMSII…CVNFEGGYRC (62 aa)) are atypical EGF-like. Cystine bridges form between cysteine 303–cysteine 318, cysteine 340–cysteine 353, and cysteine 347–cysteine 362. A helical transmembrane segment spans residues 370–390 (IMIGAGTGFGVLVLVGGVWWL). Topologically, residues 391 to 786 (RKFLVKRRMA…VEPLNPLLTW (396 aa)) are cytoplasmic. The residue at position 433 (threonine 433) is a Phosphothreonine. Residues 444–719 (FSENRVLGHG…REVFTELERI (276 aa)) enclose the Protein kinase domain. Residues 450 to 458 (LGHGGQGTV) and lysine 472 each bind ATP. Tyrosine 517 carries the phosphotyrosine modification. Aspartate 570 acts as the Proton acceptor in catalysis. Residues threonine 604 and threonine 609 each carry the phosphothreonine modification. The residue at position 617 (tyrosine 617) is a Phosphotyrosine. A compositionally biased stretch (low complexity) spans 766-775 (SSIVASPPSS). A disordered region spans residues 766-786 (SSIVASPPSSDVEPLNPLLTW).

It belongs to the protein kinase superfamily. Ser/Thr protein kinase family.

It localises to the membrane. It carries out the reaction L-seryl-[protein] + ATP = O-phospho-L-seryl-[protein] + ADP + H(+). The enzyme catalyses L-threonyl-[protein] + ATP = O-phospho-L-threonyl-[protein] + ADP + H(+). Its function is as follows. Serine/threonine-protein kinase that may function as a signaling receptor of extracellular matrix component. This chain is Wall-associated receptor kinase-like 17 (WAKL17), found in Arabidopsis thaliana (Mouse-ear cress).